A 1161-amino-acid chain; its full sequence is MLRRVAVAAVFATGRKLRCEAGRDVTAVGRIEARGLCEESAKPFPTLTMPGRNKAKSTCSCPDLQPNGQDLGESGRVARLGADESEEEGRSLSNVGDPEIIKSPSDPKQYRYIKLQNGLQALLISDLSNVEGKTGNATDEEEEEEEEEEEGEEEEEEEEDDDDDDDEDSGAEIQDDDEEGFDDEEEFDDDEHDDDDLDNEENELEELEERVEARKKTTEKQSAAALCVGVGSFADPDDLPGLAHFLEHMVFMGSLKYPDENGFDAFLKKHGGSDNASTDCERTVFQFDVQRKYFKEALDRWAQFFIHPLMIRDAIDREVEAVDSEYQLARPSDANRKEMLFGSLARPGHPMGKFFWGNAETLKHEPKKNNIDTHARLREFWMRYYSAHYMTLVVQSKETLDTLEKWVTEIFSQIPNNGLPKPNFSHLTDPFDTPAFNKLYRVVPIRKIHALTITWALPPQQQHYRVKPLHYISWLVGHEGKGSILSYLRKKCWALALFGGNGETGFEQNSTYSVFSISITLTDEGYEHFYEVAHTVFQYLKMLQKLGPEKRVFEEIQKIEDNEFHYQEQTDPVEYVENMCENMQLYPRQDFLTGDQLLFEYKPEVIAEALNQLVPQKANLVLLSGANEGRCDLKEKWFGTQYSIEDIENSWTELWKSNFDLNSDLHLPAENKYIATDFTLKAFDCPETEYPAKIVNTPQGCLWYKKDNKFKIPKAYIRFHLISPLIQKSAANVVLFDIFVNILTHNLAEPAYEADVAQLEYKLVAGEHGLIIRVKGFNHKLPLLFQLIIDYLTEFSSTPAVFTMITEQLKKTYFNILIKPETLAKDVRLLILEYSRWSMIDKYRALMDGLSLESLLNFVKDFKSQLFVEGLVQGNVTSTESMDFLRYVVDKLNFVPLEREMPVQFQVVELPSGHHLCKVRALNKGDANSEVTVYYQSGTRSLREYTLMELLVMHMEEPCFDFLRTKQTLGYHVYPTCRNTSGILGFSVTVGTQATKYNSETVDKKIEEFLSSFEEKIENLTEDAFNTQVTALIKLKECEDTHLGEEVDRNWNEVVTQQYLFDRLAHEIEALKSFSKSDLVSWFKAHRGPGSKMLSVHVVGYGKYELEEDGAPVCEDPNSREGMQLIYLPPSPLLAESTTPITDIRAFTATLSLFPYHKIVK.

The N-terminal stretch at 1–18 (MLRRVAVAAVFATGRKLR) is a signal peptide. 2 disordered regions span residues 42-105 (KPFP…KSPS) and 130-218 (VEGK…KKTT). 3 positions are modified to phosphoserine: S85, S91, and S93. Residues 138–209 (TDEEEEEEEE…EENELEELEE (72 aa)) are compositionally biased toward acidic residues. Residue H244 participates in Zn(2+) binding. Catalysis depends on E247, which acts as the Proton acceptor. H248 and E325 together coordinate Zn(2+).

This sequence belongs to the peptidase M16 family. As to quaternary structure, interacts with BACE1 and NRG1. Requires Zn(2+) as cofactor. As to expression, testis, and in a lower level in brain, heart and adrenal glands.

It is found in the mitochondrion. It localises to the cell projection. The protein resides in the dendrite. The enzyme catalyses Hydrolysis of polypeptides, preferably at -Xaa-|-Arg-Lys-, and less commonly at -Arg-|-Arg-Xaa-, in which Xaa is not Arg or Lys.. Cleaves peptide substrates on the N-terminus of arginine residues in dibasic pairs. Is a critical activator of BACE1- and ADAM17-mediated pro-neuregulin ectodomain shedding, involved in the positive regulation of axonal maturation and myelination. Required for proper functioning of 2-oxoglutarate dehydrogenase (OGDH). The protein is Nardilysin of Rattus norvegicus (Rat).